We begin with the raw amino-acid sequence, 363 residues long: Ankyrin repeat domain-containing protein 40 (363 aa).

Met1 is modified (N-acetylmethionine). ANK repeat units lie at residues 9–38 and 43–72; these read EQQE…DVNS and NGWT…DREI. The disordered stretch occupies residues 135 to 167; it reads DSTQLQNGGPSPPPVSPPADSSPPLLPPTETPL. Residues 144–164 are compositionally biased toward pro residues; that stretch reads PSPPPVSPPADSSPPLLPPTE. Ser176 bears the Phosphoserine mark.

The polypeptide is Ankyrin repeat domain-containing protein 40 (Ankrd40) (Mus musculus (Mouse)).